The following is a 361-amino-acid chain: 5-formaminoimidazole-4-carboxamide-1-(beta)-D-ribofuranosyl 5'-monophosphate synthetase (361 aa).

5-amino-1-(5-phospho-beta-D-ribosyl)imidazole-4-carboxamide is bound by residues H27 and S94. An ATP-grasp domain is found at 116-348; that stretch reads RAILRWEAER…MGQRIAKEIK (233 aa). ATP contacts are provided by residues 146-208 and E230; that span reads PDDI…ANYC. N258 contributes to the 5-amino-1-(5-phospho-beta-D-ribosyl)imidazole-4-carboxamide binding site. 2 residues coordinate Mg(2+): Q297 and E310.

Belongs to the phosphohexose mutase family. The cofactor is Mg(2+). It depends on Mn(2+) as a cofactor.

It carries out the reaction 5-amino-1-(5-phospho-beta-D-ribosyl)imidazole-4-carboxamide + formate + ATP = 5-formamido-1-(5-phospho-D-ribosyl)imidazole-4-carboxamide + ADP + phosphate. It functions in the pathway purine metabolism; IMP biosynthesis via de novo pathway; 5-formamido-1-(5-phospho-D-ribosyl)imidazole-4-carboxamide from 5-amino-1-(5-phospho-D-ribosyl)imidazole-4-carboxamide (formate route): step 1/1. In terms of biological role, catalyzes the ATP- and formate-dependent formylation of 5-aminoimidazole-4-carboxamide-1-beta-d-ribofuranosyl 5'-monophosphate (AICAR) to 5-formaminoimidazole-4-carboxamide-1-beta-d-ribofuranosyl 5'-monophosphate (FAICAR) in the absence of folates. This chain is 5-formaminoimidazole-4-carboxamide-1-(beta)-D-ribofuranosyl 5'-monophosphate synthetase, found in Methanococcus maripaludis (strain C5 / ATCC BAA-1333).